Here is a 290-residue protein sequence, read N- to C-terminus: Ribosomal RNA small subunit methyltransferase A (290 aa).

Residues N27, L29, G54, E75, D100, and N125 each contribute to the S-adenosyl-L-methionine site.

Belongs to the class I-like SAM-binding methyltransferase superfamily. rRNA adenine N(6)-methyltransferase family. RsmA subfamily.

The protein localises to the cytoplasm. It carries out the reaction adenosine(1518)/adenosine(1519) in 16S rRNA + 4 S-adenosyl-L-methionine = N(6)-dimethyladenosine(1518)/N(6)-dimethyladenosine(1519) in 16S rRNA + 4 S-adenosyl-L-homocysteine + 4 H(+). In terms of biological role, specifically dimethylates two adjacent adenosines (A1518 and A1519) in the loop of a conserved hairpin near the 3'-end of 16S rRNA in the 30S particle. May play a critical role in biogenesis of 30S subunits. The chain is Ribosomal RNA small subunit methyltransferase A from Streptococcus pyogenes serotype M5 (strain Manfredo).